The sequence spans 165 residues: NAD(P)H-quinone oxidoreductase subunit I, chloroplastic (165 aa).

4Fe-4S ferredoxin-type domains are found at residues 55–84 (GRIH…VDWE) and 95–124 (KSYS…MTEE). Residues C64, C67, C70, C74, C104, C107, C110, and C114 each contribute to the [4Fe-4S] cluster site.

This sequence belongs to the complex I 23 kDa subunit family. NDH is composed of at least 16 different subunits, 5 of which are encoded in the nucleus. [4Fe-4S] cluster is required as a cofactor.

It is found in the plastid. It localises to the chloroplast thylakoid membrane. It carries out the reaction a plastoquinone + NADH + (n+1) H(+)(in) = a plastoquinol + NAD(+) + n H(+)(out). The catalysed reaction is a plastoquinone + NADPH + (n+1) H(+)(in) = a plastoquinol + NADP(+) + n H(+)(out). NDH shuttles electrons from NAD(P)H:plastoquinone, via FMN and iron-sulfur (Fe-S) centers, to quinones in the photosynthetic chain and possibly in a chloroplast respiratory chain. The immediate electron acceptor for the enzyme in this species is believed to be plastoquinone. Couples the redox reaction to proton translocation, and thus conserves the redox energy in a proton gradient. In Psilotum nudum (Whisk fern), this protein is NAD(P)H-quinone oxidoreductase subunit I, chloroplastic.